The chain runs to 1119 residues: Multiple epidermal growth factor-like domains protein 10 (1119 aa).

An N-terminal signal peptide occupies residues 1 to 22; sequence MMSSCGPLLLAVSCCLVALTSS. At 23 to 851 the chain is on the extracellular side; it reads LNLDDPNVCS…ALPMDSYQIG (829 aa). The 78-residue stretch at 27–104 folds into the EMI domain; it reads DPNVCSHWES…FYESGDICVP (78 aa). Cystine bridges form between Cys31-Cys92, Cys57-Cys66, Cys91-Cys102, Cys102-Cys115, Cys106-Cys121, Cys123-Cys132, Cys145-Cys157, Cys151-Cys164, Cys166-Cys175, Cys188-Cys200, Cys194-Cys207, Cys209-Cys218, Cys231-Cys243, Cys237-Cys250, and Cys252-Cys260. EGF-like domains are found at residues 98 to 133, 141 to 176, 184 to 219, and 227 to 261; these read SGDI…ADCS, WGPH…WRCE, YGNN…AFCE, and HGQQ…MVCG. Residue Asn197 is glycosylated (N-linked (GlcNAc...) asparagine). A glycan (N-linked (GlcNAc...) asparagine) is linked at Asn272. EGF-like domains are found at residues 274-304 and 312-347; these read SQEC…ERCQ and YGIG…ESCE. 6 disulfide bridges follow: Cys277/Cys285, Cys279/Cys292, Cys294/Cys303, Cys316/Cys328, Cys322/Cys335, and Cys337/Cys346. Residues Asn369 and Asn393 are each glycosylated (N-linked (GlcNAc...) asparagine). 9 EGF-like domains span residues 401-436, 444-479, 487-522, 573-608, 616-653, 666-696, 709-739, 747-782, and 795-825; these read YGEA…SDCA, YGIN…VDCS, WGLG…DRCD, WGPN…TTCQ, FGHR…ALCN, GGSC…SDCS, IHTC…LYCT, YGKD…RHCE, and RQVC…TRCD. 3 cysteine pairs are disulfide-bonded: Cys405–Cys417, Cys411–Cys424, and Cys426–Cys435. N-linked (GlcNAc...) asparagine glycosylation is present at Asn447. Disulfide bonds link Cys448/Cys460, Cys454/Cys467, Cys469/Cys478, Cys491/Cys503, Cys497/Cys510, and Cys512/Cys521. Asn492 is a glycosylation site (N-linked (GlcNAc...) asparagine). An N-linked (GlcNAc...) asparagine glycan is attached at Asn576. 18 disulfide bridges follow: Cys577–Cys589, Cys583–Cys596, Cys598–Cys607, Cys620–Cys634, Cys624–Cys641, Cys643–Cys652, Cys669–Cys677, Cys671–Cys684, Cys686–Cys695, Cys712–Cys720, Cys714–Cys727, Cys729–Cys738, Cys751–Cys763, Cys757–Cys770, Cys772–Cys781, Cys798–Cys806, Cys800–Cys813, and Cys815–Cys824. N-linked (GlcNAc...) asparagine glycosylation is present at Asn674. Asn803 carries an N-linked (GlcNAc...) asparagine glycan. The chain crosses the membrane as a helical span at residues 852–872; that stretch reads AITGIIILVLLVLILLLLFII. The Cytoplasmic portion of the chain corresponds to 873–1119; that stretch reads YRKKQKGKES…SSPSPTEDSK (247 aa).

The protein belongs to the MEGF family.

Its subcellular location is the cell membrane. In terms of biological role, membrane receptor involved in phagocytosis by macrophages and astrocytes of apoptotic cells. Essential factor in the regulation of muscle development including myogenesis. Likely plays a key role in muscle cell proliferation, adhesion and motility. May control the balance between skeletal muscle satellite cells proliferation and differentiation through regulation of the notch signaling pathway. This chain is Multiple epidermal growth factor-like domains protein 10, found in Danio rerio (Zebrafish).